The primary structure comprises 587 residues: MAINLFKVSNFYTMRSYVSPHVPVPNVNLQSVSCSAKAELPHLRPVIKRRSANYPPTIWTYNFVQSLNNHNADVLYKEKARKLEEEVRRLINNESQEMLTTLELIDGIQRLGLAYLFEKDIKGALDRFVSMGGCHVLPRKSLHAIALSFRLLRQHGYEVYQDDFKDFMDQKGELLKCFKKDVQGILSFYEASFCNLEGEDLLEKAKTETKVYLNDLQRNSKSDTVESISHALELPLCRRMVMLEARWYIEAYNKREDSNYTLLELAKLNFNMAQSILQRDLKDMSRWWNNLGLANKLSFSRDRLMECFFWTIGMAFEPQFSSCRKGLTKVTSLITTIDDVYDVYGTLDELEVFTDAVERWDVNAVRDLPNCMQLSFLALYNTINEMAYETLKEQGEHIIPYLTKAWADLCKAFLQEARWSHSKCIPSFDDYVENGWRSASGNVILVHAYFLLGHNSKQALDSLLNYHDILRWPSVVFRLCNDLATSSDELNRGETANSISCYMFENRVSEEQAREQINKLIDKAWTKMNEYHIGATHFGEPFIEAAINVARIPQCIYRHGDDHGAPDSRSKERVWSLIIESISLVDS.

Residues D338, D342, and E489 each contribute to the Mg(2+) site. Residues 338–342 (DDVYD) carry the DDXXD motif motif.

It belongs to the terpene synthase family. The cofactor is Mg(2+).

Probable sesquiterpene synthase. The polypeptide is Probable terpene synthase 12 (TPS12) (Ricinus communis (Castor bean)).